The chain runs to 490 residues: Cobyric acid synthase (490 aa).

Residues R252 to A439 form the GATase cobBQ-type domain. The active-site Nucleophile is the C333. The active site involves H431.

Belongs to the CobB/CobQ family. CobQ subfamily.

The protein operates within cofactor biosynthesis; adenosylcobalamin biosynthesis. In terms of biological role, catalyzes amidations at positions B, D, E, and G on adenosylcobyrinic A,C-diamide. NH(2) groups are provided by glutamine, and one molecule of ATP is hydrogenolyzed for each amidation. This chain is Cobyric acid synthase, found in Pseudomonas aeruginosa (strain LESB58).